The chain runs to 96 residues: AVYVVGGSGGWTFNTESWPKGKRFRAGDILLFNYNPXMHNVVVVNQGGFSTCNTPAGAKVYTSGRDQIKLPKGQSYFICNFPGHCQSGMKIAVNAL.

The Phytocyanin domain maps to 1 to 96 (AVYVVGGSGG…SGMKIAVNAL (96 aa)). Cu cation contacts are provided by histidine 39, cysteine 79, histidine 84, and methionine 89. A disulfide bridge links cysteine 52 with cysteine 85.

The chain is Basic blue protein from Cucumis sativus (Cucumber).